Consider the following 87-residue polypeptide: UPF0213 protein SYNAS_10430 (87 aa).

A GIY-YIG domain is found at 2–78 (SKNYVYILEC…KKMSRAEKLQ (77 aa)).

This sequence belongs to the UPF0213 family.

This Syntrophus aciditrophicus (strain SB) protein is UPF0213 protein SYNAS_10430.